The chain runs to 456 residues: Phosphomethylpyrimidine synthase (456 aa).

Residues Asn80, Met109, Tyr139, His175, 195-197, 236-239, and Glu275 each bind substrate; these read SRG and DSLR. His279 serves as a coordination point for Zn(2+). Tyr302 is a binding site for substrate. Residue His343 coordinates Zn(2+). Residues Cys423, Cys426, and Cys431 each coordinate [4Fe-4S] cluster.

It belongs to the ThiC family. Requires [4Fe-4S] cluster as cofactor.

It carries out the reaction 5-amino-1-(5-phospho-beta-D-ribosyl)imidazole + S-adenosyl-L-methionine = 4-amino-2-methyl-5-(phosphooxymethyl)pyrimidine + CO + 5'-deoxyadenosine + formate + L-methionine + 3 H(+). Its pathway is cofactor biosynthesis; thiamine diphosphate biosynthesis. Catalyzes the synthesis of the hydroxymethylpyrimidine phosphate (HMP-P) moiety of thiamine from aminoimidazole ribotide (AIR) in a radical S-adenosyl-L-methionine (SAM)-dependent reaction. The protein is Phosphomethylpyrimidine synthase of Prochlorococcus marinus (strain MIT 9312).